We begin with the raw amino-acid sequence, 212 residues long: Transcriptional regulator GfcR (212 aa).

The interval 38–60 (LVERSGTGTEPDTSDDGGPHDIH) is disordered.

It belongs to the purine/pyrimidine phosphoribosyltransferase family. GfcR subfamily.

DNA-binding transcriptional regulator that functions as a regulator of central sugar catabolic pathways. In Haloarcula marismortui (strain ATCC 43049 / DSM 3752 / JCM 8966 / VKM B-1809) (Halobacterium marismortui), this protein is Transcriptional regulator GfcR.